Consider the following 393-residue polypeptide: DNA-directed RNA polymerase subunit Rpo1C (393 aa).

This sequence belongs to the RNA polymerase beta' chain family. As to quaternary structure, part of the RNA polymerase complex.

The protein localises to the cytoplasm. The enzyme catalyses RNA(n) + a ribonucleoside 5'-triphosphate = RNA(n+1) + diphosphate. DNA-dependent RNA polymerase (RNAP) catalyzes the transcription of DNA into RNA using the four ribonucleoside triphosphates as substrates. Forms part of the jaw domain. This is DNA-directed RNA polymerase subunit Rpo1C from Thermococcus celer.